The chain runs to 358 residues: Aminomethyltransferase (358 aa).

The protein belongs to the GcvT family. In terms of assembly, the glycine cleavage system is composed of four proteins: P, T, L and H.

The enzyme catalyses N(6)-[(R)-S(8)-aminomethyldihydrolipoyl]-L-lysyl-[protein] + (6S)-5,6,7,8-tetrahydrofolate = N(6)-[(R)-dihydrolipoyl]-L-lysyl-[protein] + (6R)-5,10-methylene-5,6,7,8-tetrahydrofolate + NH4(+). The glycine cleavage system catalyzes the degradation of glycine. This chain is Aminomethyltransferase, found in Francisella tularensis subsp. tularensis (strain WY96-3418).